Here is a 371-residue protein sequence, read N- to C-terminus: Deoxyhypusine synthase (371 aa).

Residues 107-111, 133-135, E139, and D240 contribute to the NAD(+) site; these read SNLIS and TTG. 138–139 provides a ligand contact to spermidine; the sequence is EE. Residue D245 participates in spermidine binding. Residue G287 coordinates NAD(+). H292 provides a ligand contact to spermidine. Residue 312-313 coordinates NAD(+); sequence TA. Residues 318–320 and 327–333 each bind spermidine; these read GSD and EAVSWGK. The active-site Nucleophile is K333. 346-347 is an NAD(+) binding site; sequence DA.

The protein belongs to the deoxyhypusine synthase family. The cofactor is NAD(+). In terms of tissue distribution, expressed in shoot tips.

The catalysed reaction is [eIF5A protein]-L-lysine + spermidine = [eIF5A protein]-deoxyhypusine + propane-1,3-diamine. It participates in protein modification; eIF5A hypusination. In terms of biological role, catalyzes the NAD-dependent oxidative cleavage of spermidine and the subsequent transfer of the butylamine moiety of spermidine to the epsilon-amino group of a specific lysine residue of the eIF-5A precursor protein to form the intermediate deoxyhypusine residue. Also able to produce homospermidine from putrescine. The chain is Deoxyhypusine synthase (DHS1) from Senecio vernalis (Spring groundsel).